The sequence spans 299 residues: MTEMPGWKHVYSGKVRDLFVPETAEGLTETDTVLVVASDRVSAFDHVLEPGIPGKGELLTALSLWWFDRLDAPNHLIPDHTLEGERARERIPAAVSGRSMLVKPLDMFPIECVVRGYLTGSGWQEYQESQSVCGLPLPAGLSDGDRLPEPIYTPAWKAPLGEHDENISYERTIELVGAETAGTLRELSLAVYGRGAAIAEKRGVIIADTKFEFGAERETGEITLADEVLTSDSSRYWDAAATSDVYTPKERMASFDKQIVRDWLAANWDRTGTPPALPAEIVERTAGRYRALVERLTGA.

Belongs to the SAICAR synthetase family.

The catalysed reaction is 5-amino-1-(5-phospho-D-ribosyl)imidazole-4-carboxylate + L-aspartate + ATP = (2S)-2-[5-amino-1-(5-phospho-beta-D-ribosyl)imidazole-4-carboxamido]succinate + ADP + phosphate + 2 H(+). It participates in purine metabolism; IMP biosynthesis via de novo pathway; 5-amino-1-(5-phospho-D-ribosyl)imidazole-4-carboxamide from 5-amino-1-(5-phospho-D-ribosyl)imidazole-4-carboxylate: step 1/2. The sequence is that of Phosphoribosylaminoimidazole-succinocarboxamide synthase from Leifsonia xyli subsp. xyli (strain CTCB07).